A 513-amino-acid polypeptide reads, in one-letter code: Fructose import ATP-binding protein FruK (513 aa).

ABC transporter domains are found at residues 8-244 and 262-505; these read VVMK…IGKS and PGEK…IANT. Position 40-47 (40-47) interacts with ATP; the sequence is GENGAGKS.

Belongs to the ABC transporter superfamily. As to quaternary structure, the complex is composed of an ATP-binding protein (FruK), two transmembrane proteins (FruF and FruG) and a solute-binding protein (FruE).

The protein resides in the cell membrane. It carries out the reaction D-fructose(out) + ATP + H2O = D-fructose(in) + ADP + phosphate + H(+). Part of the high-affinity ABC transporter complex FruEKFG involved in fructose uptake. Can also transport ribose and xylose, with lower affinity. Probably responsible for energy coupling to the transport system. The polypeptide is Fructose import ATP-binding protein FruK (Bifidobacterium longum (strain NCC 2705)).